The sequence spans 292 residues: Ferric aerobactin-binding protein VatD (292 aa).

A signal peptide spans 1 to 12 (MLSAALAFNSYA). The region spanning 30 to 292 (KVVALDWVLT…HITGRLTQPQ (263 aa)) is the Fe/B12 periplasmic-binding domain. Residues Trp61, Arg77, Tyr118, Arg185, Trp213, Phe215, Trp269, and Phe271 each contribute to the desferrioxamine B site.

This sequence belongs to the bacterial solute-binding protein 8 family. As to quaternary structure, the complex is composed of two ATP-binding proteins (VatC), two transmembrane proteins (VatB) and a solute-binding protein (VatD).

It is found in the periplasm. Functionally, part of the ABC transporter complex VatCDB involved in the import of iron(3+)-complexed aerobactin, a citrate-hydroxamate siderophore produced by other bacteria. Binds the iron(3+)-aerobactin complex and transfers it to the membrane-bound permease. Functions in the import of iron(3+)-complexed vulnibactin, a catecholate siderophore synthesized by V.vulnificus, in the absence of FatB. The protein is Ferric aerobactin-binding protein VatD of Vibrio vulnificus.